Reading from the N-terminus, the 416-residue chain is Beta sliding clamp (416 aa).

Belongs to the beta sliding clamp family. Forms a ring-shaped head-to-tail homodimer around DNA which binds and tethers DNA polymerases and other proteins to the DNA. The DNA replisome complex has a single clamp-loading complex (3 tau and 1 each of delta, delta', psi and chi subunits) which binds 3 Pol III cores (1 core on the leading strand and 2 on the lagging strand) each with a beta sliding clamp dimer. Additional proteins in the replisome are other copies of gamma, psi and chi, Ssb, DNA helicase and RNA primase.

It is found in the cytoplasm. In terms of biological role, confers DNA tethering and processivity to DNA polymerases and other proteins. Acts as a clamp, forming a ring around DNA (a reaction catalyzed by the clamp-loading complex) which diffuses in an ATP-independent manner freely and bidirectionally along dsDNA. Initially characterized for its ability to contact the catalytic subunit of DNA polymerase III (Pol III), a complex, multichain enzyme responsible for most of the replicative synthesis in bacteria; Pol III exhibits 3'-5' exonuclease proofreading activity. The beta chain is required for initiation of replication as well as for processivity of DNA replication. In Chlamydia trachomatis serovar D (strain ATCC VR-885 / DSM 19411 / UW-3/Cx), this protein is Beta sliding clamp (dnaN).